We begin with the raw amino-acid sequence, 331 residues long: Threonine-phosphate decarboxylase (331 aa).

Lys192 carries the N6-(pyridoxal phosphate)lysine modification.

It belongs to the class-I pyridoxal-phosphate-dependent aminotransferase family. As to quaternary structure, homodimer. Requires pyridoxal 5'-phosphate as cofactor.

Its subcellular location is the cytoplasm. The enzyme catalyses O-phospho-L-threonine + H(+) = (R)-1-aminopropan-2-yl phosphate + CO2. The protein operates within cofactor biosynthesis; adenosylcobalamin biosynthesis. In terms of biological role, decarboxylates L-threonine-O-3-phosphate to yield (R)-1-amino-2-propanol O-2-phosphate, the precursor for the linkage between the nucleotide loop and the corrin ring in cobalamin. This Pseudomonas aeruginosa (strain ATCC 15692 / DSM 22644 / CIP 104116 / JCM 14847 / LMG 12228 / 1C / PRS 101 / PAO1) protein is Threonine-phosphate decarboxylase (cobC).